A 400-amino-acid chain; its full sequence is Tryptophan synthase beta chain (400 aa).

N6-(pyridoxal phosphate)lysine is present on Lys-91.

Belongs to the TrpB family. Tetramer of two alpha and two beta chains. Requires pyridoxal 5'-phosphate as cofactor.

It catalyses the reaction (1S,2R)-1-C-(indol-3-yl)glycerol 3-phosphate + L-serine = D-glyceraldehyde 3-phosphate + L-tryptophan + H2O. The protein operates within amino-acid biosynthesis; L-tryptophan biosynthesis; L-tryptophan from chorismate: step 5/5. Its function is as follows. The beta subunit is responsible for the synthesis of L-tryptophan from indole and L-serine. This is Tryptophan synthase beta chain from Listeria monocytogenes serotype 4b (strain CLIP80459).